Reading from the N-terminus, the 268-residue chain is Syntaxin-22 (268 aa).

Positions 1–23 (MSFQDLESGRGRSTRKFNGGRQD) are disordered. N-acetylserine is present on S2. Over 2-246 (SFQDLESGRG…AAKTQKSNSS (245 aa)) the chain is Cytoplasmic. The region spanning 175 to 237 (EAVIEEREQG…SQGKSQLVQA (63 aa)) is the t-SNARE coiled-coil homology domain. Residues 247 to 267 (LTCLLLVIFGIVLLIVIIVLA) form a helical; Anchor for type IV membrane protein membrane-spanning segment. A268 is a topological domain (vesicular).

It belongs to the syntaxin family. As to quaternary structure, interacts with VTI11 and SYP51 to form a t-SNARE complex, but not with VPS45. As to expression, expressed in roots, leaves, stems, flower and green siliques.

The protein localises to the prevacuolar compartment membrane. The protein resides in the vacuole membrane. May provide the t-SNARE function in the vacuolar assembly. Promotes the formation of vacuolar membrane 'bulbs'. Required for inflorescence stem gravitropism. This Arabidopsis thaliana (Mouse-ear cress) protein is Syntaxin-22 (SYP22).